A 288-amino-acid chain; its full sequence is Protease HtpX (288 aa).

2 helical membrane passes run 5–25 (IALF…VMSL) and 35–55 (GLLV…LLLS). His140 lines the Zn(2+) pocket. Residue Glu141 is part of the active site. Zn(2+) is bound at residue His144. The next 2 membrane-spanning stretches (helical) occupy residues 155–175 (LLQG…GGII) and 194–214 (IIVF…SMWF). Glu219 is a binding site for Zn(2+).

The protein belongs to the peptidase M48B family. It depends on Zn(2+) as a cofactor.

The protein localises to the cell inner membrane. The chain is Protease HtpX from Stenotrophomonas maltophilia (strain K279a).